We begin with the raw amino-acid sequence, 357 residues long: DNA replication and repair protein RecF (357 aa).

30-37 (GANGSGKT) lines the ATP pocket.

This sequence belongs to the RecF family.

It is found in the cytoplasm. The RecF protein is involved in DNA metabolism; it is required for DNA replication and normal SOS inducibility. RecF binds preferentially to single-stranded, linear DNA. It also seems to bind ATP. The polypeptide is DNA replication and repair protein RecF (Salmonella agona (strain SL483)).